Consider the following 417-residue polypeptide: uncharacterized protein (417 aa).

Belongs to the MG032/MG096/MG288 family.

This is an uncharacterized protein from Mycoplasma pneumoniae (strain ATCC 29342 / M129 / Subtype 1) (Mycoplasmoides pneumoniae).